The following is a 100-amino-acid chain: Esterase PE11 (100 aa).

The 91-residue stretch at 4–94 folds into the PE domain; that stretch reads VTTRPDSIGE…TSYWLTELAN (91 aa).

It belongs to the mycobacterial PE family.

It localises to the secreted. The protein resides in the cell wall. The enzyme catalyses an acetyl ester + H2O = an aliphatic alcohol + acetate + H(+). It carries out the reaction a butanoate ester + H2O = an aliphatic alcohol + butanoate + H(+). The catalysed reaction is an octanoate ester + H2O = an aliphatic alcohol + octanoate + H(+). Functionally, involved in cell wall lipids remodeling and in virulence. Restricts the biofilm growth and is essential for the optimal intracellular survival of M.tuberculosis. Shows esterase activity with a preference for short-chain esters, particularly pNP-acetate (C2) and pNP-butyrate (C4). Has weaker activity with pNP-octanoate (C8), pNP-laurate (C12) and pNP-myristate (C14). Shows weak long-chain triacylglycerol (TAG) hydrolase activity in vitro. Not necessary for PPE17 stability or for its localization on the mycobacterial surface. The polypeptide is Esterase PE11 (Mycobacterium tuberculosis (strain ATCC 25618 / H37Rv)).